The primary structure comprises 96 residues: uncharacterized protein (96 aa).

The stretch at 9 to 86 (EELKSQAQVY…NKYADTVAER (78 aa)) forms a coiled coil.

It belongs to the WXG100 family. sagEsxA-like subfamily.

This is an uncharacterized protein from Clostridium acetobutylicum (strain ATCC 824 / DSM 792 / JCM 1419 / IAM 19013 / LMG 5710 / NBRC 13948 / NRRL B-527 / VKM B-1787 / 2291 / W).